The sequence spans 185 residues: ATP synthase subunit b 2 (185 aa).

The disordered stretch occupies residues 1–24 (MADSHGNAKGATAHTEAGGGHKAP). A helical membrane pass occupies residues 34–56 (ASQLVSLTIAFVALYLISSRLAL).

It belongs to the ATPase B chain family. As to quaternary structure, F-type ATPases have 2 components, F(1) - the catalytic core - and F(0) - the membrane proton channel. F(1) has five subunits: alpha(3), beta(3), gamma(1), delta(1), epsilon(1). F(0) has three main subunits: a(1), b(2) and c(10-14). The alpha and beta chains form an alternating ring which encloses part of the gamma chain. F(1) is attached to F(0) by a central stalk formed by the gamma and epsilon chains, while a peripheral stalk is formed by the delta and b chains.

It is found in the cell inner membrane. Functionally, f(1)F(0) ATP synthase produces ATP from ADP in the presence of a proton or sodium gradient. F-type ATPases consist of two structural domains, F(1) containing the extramembraneous catalytic core and F(0) containing the membrane proton channel, linked together by a central stalk and a peripheral stalk. During catalysis, ATP synthesis in the catalytic domain of F(1) is coupled via a rotary mechanism of the central stalk subunits to proton translocation. Its function is as follows. Component of the F(0) channel, it forms part of the peripheral stalk, linking F(1) to F(0). The b'-subunit is a diverged and duplicated form of b found in plants and photosynthetic bacteria. This Nitrobacter hamburgensis (strain DSM 10229 / NCIMB 13809 / X14) protein is ATP synthase subunit b 2 (atpF2).